The chain runs to 305 residues: NAD kinase (305 aa).

Asp82 serves as the catalytic Proton acceptor. Residues 82–83, 156–157, Arg184, Asp186, 197–202, Ala221, and Gln255 each bind NAD(+); these read DG, ND, and TAYALS.

The protein belongs to the NAD kinase family. The cofactor is a divalent metal cation.

It is found in the cytoplasm. The enzyme catalyses NAD(+) + ATP = ADP + NADP(+) + H(+). Functionally, involved in the regulation of the intracellular balance of NAD and NADP, and is a key enzyme in the biosynthesis of NADP. Catalyzes specifically the phosphorylation on 2'-hydroxyl of the adenosine moiety of NAD to yield NADP. In Cupriavidus pinatubonensis (strain JMP 134 / LMG 1197) (Cupriavidus necator (strain JMP 134)), this protein is NAD kinase.